A 165-amino-acid polypeptide reads, in one-letter code: Probable deoxyuridine 5'-triphosphate nucleotidohydrolase (165 aa).

Residues 39 to 49 (GRIDTDGKTIG) show a composition bias toward basic and acidic residues. The interval 39-64 (GRIDTDGKTIGDRSPVTPTADEDSTD) is disordered.

This sequence belongs to the dCTP deaminase family. Archaeal dUTPase subfamily.

It catalyses the reaction dUTP + H2O = dUMP + diphosphate + H(+). It functions in the pathway pyrimidine metabolism; dUMP biosynthesis; dUMP from dCTP (dUTP route): step 2/2. This enzyme is involved in nucleotide metabolism: it produces dUMP, the immediate precursor of thymidine nucleotides and it decreases the intracellular concentration of dUTP so that uracil cannot be incorporated into DNA. The polypeptide is Probable deoxyuridine 5'-triphosphate nucleotidohydrolase (Halobacterium salinarum (strain ATCC 29341 / DSM 671 / R1)).